We begin with the raw amino-acid sequence, 212 residues long: MSEQSSSSRYQQLQNEEEPGENAQASADAPPPYSSIAGESSGLFDYKDELGFPKPPSYNVATTLPSYDEAERSKAEATIPLVPGRDDDFVARDDFDDADQLRIGNDGIFMLTFFMAFLFNWIGFFLSFCLTSSAAGRYGAISGFGLSLIKWILIVRFSTYFPGYFDGQYWLWWVFLVLGFLLFLRGFINYAKVRKMPDNFSTLPRTRVLFIY.

A compositionally biased stretch (polar residues) spans 1–14 (MSEQSSSSRYQQLQ). Positions 1–40 (MSEQSSSSRYQQLQNEEEPGENAQASADAPPPYSSIAGES) are disordered. Residues 1-107 (MSEQSSSSRY…ADQLRIGNDG (107 aa)) are Cytoplasmic-facing. Short sequence motifs (PPxY motif) lie at residues 30 to 33 (PPPY) and 55 to 58 (PPSY). A helical membrane pass occupies residues 108–128 (IFMLTFFMAFLFNWIGFFLSF). The Extracellular portion of the chain corresponds to 129 to 134 (CLTSSA). Residues 135 to 155 (AGRYGAISGFGLSLIKWILIV) form a helical membrane-spanning segment. Over 156–163 (RFSTYFPG) the chain is Cytoplasmic. A helical transmembrane segment spans residues 164 to 184 (YFDGQYWLWWVFLVLGFLLFL). At 185–212 (RGFINYAKVRKMPDNFSTLPRTRVLFIY) the chain is on the extracellular side.

It localises to the golgi apparatus membrane. In terms of biological role, may play a role in Golgi structure maintenance. The sequence is that of NEDD4 family-interacting protein 1 (ndfip1) from Xenopus laevis (African clawed frog).